Consider the following 356-residue polypeptide: Histidinol-phosphate aminotransferase (356 aa).

An N6-(pyridoxal phosphate)lysine modification is found at Lys214.

The protein belongs to the class-II pyridoxal-phosphate-dependent aminotransferase family. Histidinol-phosphate aminotransferase subfamily. Homodimer. Pyridoxal 5'-phosphate is required as a cofactor.

It catalyses the reaction L-histidinol phosphate + 2-oxoglutarate = 3-(imidazol-4-yl)-2-oxopropyl phosphate + L-glutamate. Its pathway is amino-acid biosynthesis; L-histidine biosynthesis; L-histidine from 5-phospho-alpha-D-ribose 1-diphosphate: step 7/9. This is Histidinol-phosphate aminotransferase from Shigella dysenteriae serotype 1 (strain Sd197).